Consider the following 201-residue polypeptide: Recombination protein RecR (201 aa).

The C4-type zinc finger occupies 60–75; it reads CQVCGNVDVRDPCTVC. The Toprim domain occupies 83–178; the sequence is SVLVVVAEVA…KVTRLAHGVP (96 aa).

This sequence belongs to the RecR family.

Functionally, may play a role in DNA repair. It seems to be involved in an RecBC-independent recombinational process of DNA repair. It may act with RecF and RecO. In Azorhizobium caulinodans (strain ATCC 43989 / DSM 5975 / JCM 20966 / LMG 6465 / NBRC 14845 / NCIMB 13405 / ORS 571), this protein is Recombination protein RecR.